We begin with the raw amino-acid sequence, 335 residues long: Trans-3-hydroxy-L-proline dehydratase (335 aa).

The Proton acceptor role is filled by cysteine 91. Substrate-binding positions include 92-93 (GH), histidine 222, and 256-257 (GS).

It belongs to the proline racemase family. Homodimer.

It catalyses the reaction trans-3-hydroxy-L-proline = 1-pyrroline-2-carboxylate + H2O. Functionally, catalyzes the dehydration of trans-3-hydroxy-L-proline (t3LHyp) to Delta(1)-pyrroline-2-carboxylate (Pyr2C). Does not possess neither proline racemase nor 4-hydroxyproline 2-epimerase activities. This chain is Trans-3-hydroxy-L-proline dehydratase, found in Burkholderia cenocepacia (strain HI2424).